The chain runs to 249 residues: MHALGRTPALTLLIFIYNFVSVYTIVSVQMGTKARLCCRSIPLTKAVLITWIIKPRGQPSCIMAYKVETKETNETCLGRNITWASTPDHIPDLQISAVALQHEGNYLCEITTPEGNFHKVYDLQVLVPPEVTYFLGENRTAVCEAMAGKPAAQISWTPDGDCVTKSESHSNGTVTVRSTCHWEQNNVSAVSCIVSHSTGNQSLSIELSRGTTSTTPSLLTILYVKMVLLGIILLKVGFAFFQKRNVTRT.

The first 24 residues, 1–24 (MHALGRTPALTLLIFIYNFVSVYT), serve as a signal peptide directing secretion. The Ig-like V-type domain occupies 25–124 (IVSVQMGTKA…GNFHKVYDLQ (100 aa)). Residues 25–220 (IVSVQMGTKA…TTSTTPSLLT (196 aa)) are Extracellular-facing. Cys-38 and Cys-108 are oxidised to a cystine. 3 N-linked (GlcNAc...) asparagine glycosylation sites follow: Asn-73, Asn-138, and Asn-171. One can recognise an Ig-like C2-type domain in the interval 113 to 208 (PEGNFHKVYD…GNQSLSIELS (96 aa)). Cys-143 and Cys-192 form a disulfide bridge. Residues 221 to 241 (ILYVKMVLLGIILLKVGFAFF) traverse the membrane as a helical segment. Residues 242–249 (QKRNVTRT) are Cytoplasmic-facing.

This sequence belongs to the CD200R family. In terms of tissue distribution, expressed in bone marrow, spleen, brain, lung, testis and thymus.

Its subcellular location is the membrane. Its function is as follows. According to PubMed:15187158 it is a receptor for the CD200 cell surface glycoprotein. According to PubMed:16081818 it is not a receptor for the CD200/OX2 cell surface glycoprotein. Involved in the recruitment or surface expression of the TYROBP receptor. The chain is Cell surface glycoprotein CD200 receptor 2 (Cd200r1l) from Mus musculus (Mouse).